A 160-amino-acid polypeptide reads, in one-letter code: Endoribonuclease YbeY (160 aa).

3 residues coordinate Zn(2+): His112, His116, and His122. The interval 141-160 (ELGHPDPYACDDEEPPSKEK) is disordered.

It belongs to the endoribonuclease YbeY family. It depends on Zn(2+) as a cofactor.

The protein localises to the cytoplasm. In terms of biological role, single strand-specific metallo-endoribonuclease involved in late-stage 70S ribosome quality control and in maturation of the 3' terminus of the 16S rRNA. This is Endoribonuclease YbeY from Pseudomonas aeruginosa (strain UCBPP-PA14).